Reading from the N-terminus, the 256-residue chain is Imidazole glycerol phosphate synthase subunit HisF (256 aa).

Active-site residues include Asp-11 and Asp-130.

The protein belongs to the HisA/HisF family. In terms of assembly, heterodimer of HisH and HisF.

The protein localises to the cytoplasm. It carries out the reaction 5-[(5-phospho-1-deoxy-D-ribulos-1-ylimino)methylamino]-1-(5-phospho-beta-D-ribosyl)imidazole-4-carboxamide + L-glutamine = D-erythro-1-(imidazol-4-yl)glycerol 3-phosphate + 5-amino-1-(5-phospho-beta-D-ribosyl)imidazole-4-carboxamide + L-glutamate + H(+). It functions in the pathway amino-acid biosynthesis; L-histidine biosynthesis; L-histidine from 5-phospho-alpha-D-ribose 1-diphosphate: step 5/9. IGPS catalyzes the conversion of PRFAR and glutamine to IGP, AICAR and glutamate. The HisF subunit catalyzes the cyclization activity that produces IGP and AICAR from PRFAR using the ammonia provided by the HisH subunit. The sequence is that of Imidazole glycerol phosphate synthase subunit HisF from Prochlorococcus marinus (strain NATL1A).